The primary structure comprises 754 residues: 5-methyltetrahydropteroyltriglutamate--homocysteine methyltransferase (754 aa).

5-methyltetrahydropteroyltri-L-glutamate is bound by residues 16–19 (RELK) and Lys114. L-homocysteine is bound by residues 430-432 (IGS) and Glu483. L-methionine contacts are provided by residues 430 to 432 (IGS) and Glu483. 5-methyltetrahydropteroyltri-L-glutamate is bound by residues 514–515 (RC) and Trp560. An L-homocysteine-binding site is contributed by Asp598. An L-methionine-binding site is contributed by Asp598. 5-methyltetrahydropteroyltri-L-glutamate is bound at residue Glu604. The Zn(2+) site is built by His640, Cys642, and Glu664. His693 acts as the Proton donor in catalysis. Position 725 (Cys725) interacts with Zn(2+).

It belongs to the vitamin-B12 independent methionine synthase family. It depends on Zn(2+) as a cofactor.

The catalysed reaction is 5-methyltetrahydropteroyltri-L-glutamate + L-homocysteine = tetrahydropteroyltri-L-glutamate + L-methionine. Its pathway is amino-acid biosynthesis; L-methionine biosynthesis via de novo pathway; L-methionine from L-homocysteine (MetE route): step 1/1. Catalyzes the transfer of a methyl group from 5-methyltetrahydrofolate to homocysteine resulting in methionine formation. The protein is 5-methyltetrahydropteroyltriglutamate--homocysteine methyltransferase of Aeromonas salmonicida (strain A449).